The chain runs to 933 residues: Isoleucine--tRNA ligase (933 aa).

Residues 57–67 (PYANGNIHVGH) carry the 'HIGH' region motif. E554 lines the L-isoleucyl-5'-AMP pocket. The 'KMSKS' region motif lies at 595 to 599 (KMSKS). Residue K598 participates in ATP binding.

The protein belongs to the class-I aminoacyl-tRNA synthetase family. IleS type 1 subfamily. Monomer.

It is found in the cytoplasm. The catalysed reaction is tRNA(Ile) + L-isoleucine + ATP = L-isoleucyl-tRNA(Ile) + AMP + diphosphate. Its function is as follows. Catalyzes the attachment of isoleucine to tRNA(Ile). As IleRS can inadvertently accommodate and process structurally similar amino acids such as valine, to avoid such errors it has two additional distinct tRNA(Ile)-dependent editing activities. One activity is designated as 'pretransfer' editing and involves the hydrolysis of activated Val-AMP. The other activity is designated 'posttransfer' editing and involves deacylation of mischarged Val-tRNA(Ile). The chain is Isoleucine--tRNA ligase from Streptococcus pyogenes serotype M1.